The primary structure comprises 777 residues: Endonuclease MutS2 (777 aa).

328–335 provides a ligand contact to ATP; that stretch reads GPNTGGKT. The Smr domain occupies 702-777; the sequence is LDLRGKRYEE…GSGCTIATLG (76 aa).

Belongs to the DNA mismatch repair MutS family. MutS2 subfamily. In terms of assembly, homodimer. Binds to stalled ribosomes, contacting rRNA.

Its function is as follows. Endonuclease that is involved in the suppression of homologous recombination and thus may have a key role in the control of bacterial genetic diversity. Functionally, acts as a ribosome collision sensor, splitting the ribosome into its 2 subunits. Detects stalled/collided 70S ribosomes which it binds and splits by an ATP-hydrolysis driven conformational change. Acts upstream of the ribosome quality control system (RQC), a ribosome-associated complex that mediates the extraction of incompletely synthesized nascent chains from stalled ribosomes and their subsequent degradation. Probably generates substrates for RQC. The polypeptide is Endonuclease MutS2 (Streptococcus uberis (strain ATCC BAA-854 / 0140J)).